The chain runs to 254 residues: Phosphoribosylaminoimidazole-succinocarboxamide synthase (254 aa).

The protein belongs to the SAICAR synthetase family.

The catalysed reaction is 5-amino-1-(5-phospho-D-ribosyl)imidazole-4-carboxylate + L-aspartate + ATP = (2S)-2-[5-amino-1-(5-phospho-beta-D-ribosyl)imidazole-4-carboxamido]succinate + ADP + phosphate + 2 H(+). It functions in the pathway purine metabolism; IMP biosynthesis via de novo pathway; 5-amino-1-(5-phospho-D-ribosyl)imidazole-4-carboxamide from 5-amino-1-(5-phospho-D-ribosyl)imidazole-4-carboxylate: step 1/2. This chain is Phosphoribosylaminoimidazole-succinocarboxamide synthase, found in Gluconacetobacter diazotrophicus (strain ATCC 49037 / DSM 5601 / CCUG 37298 / CIP 103539 / LMG 7603 / PAl5).